A 268-amino-acid polypeptide reads, in one-letter code: Cytochrome c oxidase subunit 3 (268 aa).

7 helical membrane-spanning segments follow: residues 19 to 39 (PWPI…VLTM), 49 to 69 (FDLG…DIVI), 85 to 105 (LIIG…SVFW), 124 to 144 (PVGI…IILL), 165 to 185 (SIIG…FQAF), 202 to 222 (VFFA…LFLF), and 245 to 265 (ILYW…VYFW).

This sequence belongs to the cytochrome c oxidase subunit 3 family. In terms of assembly, component of the cytochrome c oxidase (complex IV, CIV), a multisubunit enzyme composed of a catalytic core of 3 subunits and several supernumerary subunits. The complex exists as a monomer or a dimer and forms supercomplexes (SCs) in the inner mitochondrial membrane with ubiquinol-cytochrome c oxidoreductase (cytochrome b-c1 complex, complex III, CIII).

It is found in the mitochondrion inner membrane. It catalyses the reaction 4 Fe(II)-[cytochrome c] + O2 + 8 H(+)(in) = 4 Fe(III)-[cytochrome c] + 2 H2O + 4 H(+)(out). Functionally, component of the cytochrome c oxidase, the last enzyme in the mitochondrial electron transport chain which drives oxidative phosphorylation. The respiratory chain contains 3 multisubunit complexes succinate dehydrogenase (complex II, CII), ubiquinol-cytochrome c oxidoreductase (cytochrome b-c1 complex, complex III, CIII) and cytochrome c oxidase (complex IV, CIV), that cooperate to transfer electrons derived from NADH and succinate to molecular oxygen, creating an electrochemical gradient over the inner membrane that drives transmembrane transport and the ATP synthase. Cytochrome c oxidase is the component of the respiratory chain that catalyzes the reduction of oxygen to water. Electrons originating from reduced cytochrome c in the intermembrane space (IMS) are transferred via the dinuclear copper A center (CU(A)) of subunit 2 and heme A of subunit 1 to the active site in subunit 1, a binuclear center (BNC) formed by heme A3 and copper B (CU(B)). The BNC reduces molecular oxygen to 2 water molecules using 4 electrons from cytochrome c in the IMS and 4 protons from the mitochondrial matrix. In Schizophyllum commune (Split gill fungus), this protein is Cytochrome c oxidase subunit 3 (COIII).